Here is a 136-residue protein sequence, read N- to C-terminus: uncharacterized protein (136 aa).

This is an uncharacterized protein from Saccharomyces cerevisiae (strain ATCC 204508 / S288c) (Baker's yeast).